The following is a 240-amino-acid chain: Protein OPG176 (240 aa).

The protein belongs to the orthopoxvirus OPG176 family. Tetramer. Interacts with host MYD88, TRF4, TICAM2 and MAL.

BCL2-like protein which disrupts the host immune response by inhibiting the TLR4 signaling pathway leading to NF-kappa-B activation. Acts close to the plasma membrane and targets several host TIR-domain containing adapter proteins including MYD88, TIRAP, TRIF and TICAM2. In turn, blocks the host NF-kappa-B and TRIF-mediated IRF3 activation. The polypeptide is Protein OPG176 (OPG176) (Bos taurus (Bovine)).